Reading from the N-terminus, the 77-residue chain is Sec-independent protein translocase protein TatA (77 aa).

Residues 3–23 (VFGIGLPELIVILVVALLIFG) traverse the membrane as a helical segment. Residues 56–77 (TAALEEEQQAKAEAESPREISP) form a disordered region. Basic and acidic residues predominate over residues 63–77 (QQAKAEAESPREISP).

It belongs to the TatA/E family. As to quaternary structure, forms a complex with TatC.

Its subcellular location is the cell inner membrane. Functionally, part of the twin-arginine translocation (Tat) system that transports large folded proteins containing a characteristic twin-arginine motif in their signal peptide across membranes. TatA could form the protein-conducting channel of the Tat system. The polypeptide is Sec-independent protein translocase protein TatA (Thermosynechococcus vestitus (strain NIES-2133 / IAM M-273 / BP-1)).